The chain runs to 314 residues: Methionyl-tRNA formyltransferase (314 aa).

A (6S)-5,6,7,8-tetrahydrofolate-binding site is contributed by 113-116 (SLLP).

It belongs to the Fmt family.

The catalysed reaction is L-methionyl-tRNA(fMet) + (6R)-10-formyltetrahydrofolate = N-formyl-L-methionyl-tRNA(fMet) + (6S)-5,6,7,8-tetrahydrofolate + H(+). Attaches a formyl group to the free amino group of methionyl-tRNA(fMet). The formyl group appears to play a dual role in the initiator identity of N-formylmethionyl-tRNA by promoting its recognition by IF2 and preventing the misappropriation of this tRNA by the elongation apparatus. The protein is Methionyl-tRNA formyltransferase of Chlorobaculum tepidum (strain ATCC 49652 / DSM 12025 / NBRC 103806 / TLS) (Chlorobium tepidum).